We begin with the raw amino-acid sequence, 512 residues long: Rab11 family-interacting protein 2 (512 aa).

The C2 domain occupies 1 to 120; sequence MMLSEQAQKW…DKQRRKTEWF (120 aa). The interval 15-102 is necessary for its cellular translocation to the plasma membrane; that stretch reads VQVTVLQAKD…GLDKFLGQVA (88 aa). Disordered regions lie at residues 174–231 and 263–287; these read RKSD…MSDL and PESGSLKSPHRRTLSFDTSKLNQPG. 2 stretches are compositionally biased toward polar residues: residues 221-231 and 277-287; these read RLSSAHSMSDL and SFDTSKLNQPG. Serine 227 carries the phosphoserine; by MARK2 modification. The residue at position 277 (serine 277) is a Phosphoserine. The short motif at 323 to 325 is the NPF 1 element; sequence NPF. Over residues 347–374 the composition is skewed to basic and acidic residues; it reads KESKREKREKVSLFERVTGKRDSRRPDK. The interval 347–390 is disordered; the sequence is KESKREKREKVSLFERVTGKRDSRRPDKLNNGGSDSPCDLKSPS. 2 short sequence motifs (NPF) span residues 406–408 and 440–442; these read NPF. Residues 437–499 form the FIP-RBD domain; sequence PDNNPFDATA…EETPSILRVP (63 aa). Residues 465–512 are necessary for interaction with AP2A1, RAB11A, subcellular location, endocytosis activity and homooligomerization; it reads ELLRRKDTHIRELEDYIDNLLVRVMEETPSILRVPYEPSRKAGKFTNS.

In terms of assembly, homooligomerizes in a Rab11-independent manner. Forms a heterooligomeric complex with RAB11FIP4. Interacts with AP2A1, MYO5B, RAB25 and REPS1. Interacts with RAB11A and RAB11B (activated GTP-bound form). Interacts with NPC1L1. Interacts (via NPF motifs) with EHD1 and EHD3. Interacts with TICAM2; this interaction directs RAB11FIP2 to the phagosome. Interacts with RAB14 and RAB25 (GTP-bound forms). Post-translationally, phosphorylation at Ser-227 by MARK2 regulates epithelial cell polarity.

It is found in the cell membrane. The protein localises to the recycling endosome membrane. Functionally, a Rab11 effector binding preferentially phosphatidylinositol 3,4,5-trisphosphate (PtdInsP3) and phosphatidic acid (PA) and acting in the regulation of the transport of vesicles from the endosomal recycling compartment (ERC) to the plasma membrane. Involved in insulin granule exocytosis. Also involved in receptor-mediated endocytosis and membrane trafficking of recycling endosomes, probably originating from clathrin-coated vesicles. Required in a complex with MYO5B and RAB11 for the transport of NPC1L1 to the plasma membrane. Also acts as a regulator of cell polarity. Plays an essential role in phagocytosis through a mechanism involving TICAM2, RAC1 and CDC42 Rho GTPases for controlling actin-dynamics. This Mus musculus (Mouse) protein is Rab11 family-interacting protein 2 (Rab11fip2).